A 240-amino-acid chain; its full sequence is MIAFIVLPILAAVLQQSSGSVDFDSESPRKPEIQNKIVDLHNFLRRSVNPTASNMLKMEWYPEAAANAERWAYRCIESHSPRDSRVLGGIKCGENIYMSPVPIKWTEIIHAWHGENKNFKYGIGAVPPNAVTGHFSQVVWYKSYRIGCAAAYCPSSKYSYFYVCQYCPAGNIIGKTATPYKSGPPCGDCPSACDNGLCTNPCTKEDKYTNCKSLVQQAGCQDKQMQSDCPAICFCQNKII.

Positions M1–G19 are cleaved as a signal peptide. Residues V38–Y166 form the SCP domain. Disulfide bonds link C75–C153, C92–C167, C148–C164, C186–C193, C189–C198, C202–C235, C211–C229, and C220–C233. Residues C202–C235 enclose the ShKT domain.

This sequence belongs to the CRISP family. Expressed by the venom gland.

The protein resides in the secreted. Catrin-2 weakly blocks contraction of smooth muscle elicited by high potassium-induced depolarization, but does not block caffeine-stimulated contraction. Catrin-1 has no significant effect. May target voltage-gated calcium channels on smooth muscle. In Crotalus atrox (Western diamondback rattlesnake), this protein is Cysteine-rich venom protein catrin.